A 921-amino-acid chain; its full sequence is Isoleucine--tRNA ligase (921 aa).

Positions 57–67 (PYANGDIHMGH) match the 'HIGH' region motif. Residue E552 coordinates L-isoleucyl-5'-AMP. Positions 593–597 (KMSKS) match the 'KMSKS' region motif. K596 provides a ligand contact to ATP. C888, C891, C908, and C911 together coordinate Zn(2+).

The protein belongs to the class-I aminoacyl-tRNA synthetase family. IleS type 1 subfamily. As to quaternary structure, monomer. Zn(2+) serves as cofactor.

Its subcellular location is the cytoplasm. The enzyme catalyses tRNA(Ile) + L-isoleucine + ATP = L-isoleucyl-tRNA(Ile) + AMP + diphosphate. Catalyzes the attachment of isoleucine to tRNA(Ile). As IleRS can inadvertently accommodate and process structurally similar amino acids such as valine, to avoid such errors it has two additional distinct tRNA(Ile)-dependent editing activities. One activity is designated as 'pretransfer' editing and involves the hydrolysis of activated Val-AMP. The other activity is designated 'posttransfer' editing and involves deacylation of mischarged Val-tRNA(Ile). The protein is Isoleucine--tRNA ligase of Bacillus cytotoxicus (strain DSM 22905 / CIP 110041 / 391-98 / NVH 391-98).